Reading from the N-terminus, the 503-residue chain is Probable Xaa-Pro aminopeptidase TSTA_094700 (503 aa).

Positions 277, 288, 428, and 467 each coordinate Mn(2+).

This sequence belongs to the peptidase M24B family. The cofactor is Mn(2+).

The enzyme catalyses Release of any N-terminal amino acid, including proline, that is linked to proline, even from a dipeptide or tripeptide.. Catalyzes the removal of a penultimate prolyl residue from the N-termini of peptides. This chain is Probable Xaa-Pro aminopeptidase TSTA_094700, found in Talaromyces stipitatus (strain ATCC 10500 / CBS 375.48 / QM 6759 / NRRL 1006) (Penicillium stipitatum).